We begin with the raw amino-acid sequence, 315 residues long: S-methyl-5'-thioadenosine phosphorylase (315 aa).

Residues Ser22, 65–66 (RH), and 98–99 (SA) each bind phosphate. Met205 provides a ligand contact to substrate. Phosphate is bound at residue Ser206. 229–231 (DYD) lines the substrate pocket.

Belongs to the PNP/MTAP phosphorylase family. MTAP subfamily. Homotrimer.

The protein resides in the cytoplasm. It is found in the nucleus. The enzyme catalyses S-methyl-5'-thioadenosine + phosphate = 5-(methylsulfanyl)-alpha-D-ribose 1-phosphate + adenine. The protein operates within amino-acid biosynthesis; L-methionine biosynthesis via salvage pathway; S-methyl-5-thio-alpha-D-ribose 1-phosphate from S-methyl-5'-thioadenosine (phosphorylase route): step 1/1. In terms of biological role, catalyzes the reversible phosphorylation of S-methyl-5'-thioadenosine (MTA) to adenine and 5-methylthioribose-1-phosphate. Involved in the breakdown of MTA, a major by-product of polyamine biosynthesis. Responsible for the first step in the methionine salvage pathway after MTA has been generated from S-adenosylmethionine. Has broad substrate specificity with 6-aminopurine nucleosides as preferred substrates. In Mycosarcoma maydis (Corn smut fungus), this protein is S-methyl-5'-thioadenosine phosphorylase.